Reading from the N-terminus, the 311-residue chain is Replicative helicase loader DnaI (311 aa).

The tract at residues 1–136 (MEPIGRSLQG…LGATFQQVDI (136 aa)) is N-terminal domain (Nd). Residues Cys67, Cys70, His84, and Cys101 each contribute to the Zn(2+) site. Positions 137–311 (SDPSRLAMFQ…RLDGENRRHP (175 aa)) are C-terminal domain (Cd). ATP is bound at residue 168 to 175 (GKFGVGKT).

This sequence belongs to the DnaI family. In terms of assembly, the DNA replisome assembles sequentially on oriC in this order; DnaA, DnaD, DnaB, DnaI-DnaC helicase. Monomer with a very minor amount of dimer in solution. Interacts with replicative helicase (from G.stearothermophilus, called DnaB); this interaction is disrupted by DnaD. Interacts with replicative helicase DnaC, forms a DnaC(6):DnaI(6) complex. Interacts with the helicase as 3 dimers. A stable complex with DnaG primase, DnaI(6):helicase(6):DnaG(3) fragment can be isolated; DnaI and DnaG do not contact each other (helicase and DnaG in this complex are derived from G.stearothermophilus). Zn(2+) is required as a cofactor.

The protein localises to the cytoplasm. The enzyme catalyses ATP + H2O = ADP + phosphate + H(+). In terms of biological role, helps load the DnaC replicative helicase onto single-stranded (ss)DNA and simulates the helicase activity; in the presence of DnaB more helicase activity is seen. Regulates DnaC helicase activity, at low concentrations stimulates the DNA helicase and ATPase activities of DnaC. Has no measurable ATPase activity after 1 hour incubation of 6 uM DnaI with or without DNA. Another group has found the protein has weak ATPase activity that is not stimulated by ssDNA. Whole protein binds forked DNA (but not ssDNA) weakly; ATP and ADPNP (probably 5'-adenylyl beta, gamma-imidodiphosphate) have no effect on DNA binding. DnaB, DnaD and DnaI may be required for a PriA-independent pathway of replication fork restart. In Bacillus subtilis (strain 168), this protein is Replicative helicase loader DnaI.